The primary structure comprises 101 residues: Small ribosomal subunit protein uS14 (101 aa).

A disordered region spans residues 1-23; the sequence is MAKKSSVEKNKRRRKMVAQQAPK.

It belongs to the universal ribosomal protein uS14 family. Part of the 30S ribosomal subunit. Contacts proteins S3 and S10.

Binds 16S rRNA, required for the assembly of 30S particles and may also be responsible for determining the conformation of the 16S rRNA at the A site. The chain is Small ribosomal subunit protein uS14 from Rhodospirillum centenum (strain ATCC 51521 / SW).